The sequence spans 533 residues: MQSSSEHISDVLIIGSGAAGLSLALRLAPHCKVTVLSKGPLNEGATFYAQGGIAAVFDETDSISSHVDDTLIAGAGLCDKEAVEFIASNARSCVQWLIDQGVLFDTETSANGEERYHLTREGGHSHRRILHTADATGKEVETTLVGKASNHPNISVKERCNAVDLITSNKIGLAGTKRVVGAYVWNRELEKVETFRAKAVVLATGGAAKVYQYTTNPDISSGDGIAMAWRAGCRVANLEFNQFHPTCLFHPQARNFLLTEALRGEGAYLKRPDGSRFMLDFDPRGELAPRDIVARAIDHEMKRLGADCMYLDISHKPTDFVMQHFPMIYEKLLSLGIDLTKEAIPIVPAAHYTCGGVMVDQHGRTDLDGLYAIGEVSYTGLHGANRMASNSLLECLVYGWSAAEDILTRLPTAKLAKHLPDWDESRVDNSDERVVIQHNWHELRLFMWDYVGIVRTTKRLERALRRINTLQQEIDEYYANFRISNNLLELRNLVQVAELIVRCAMERKESRGLHYTLDYPDQIENPQPTILHP.

FAD is bound by residues Ser-16–Ala-19, Lys-38, Ala-45–Gly-52, and Asp-223. Arg-290 acts as the Proton donor/acceptor in catalysis. FAD contacts are provided by residues Glu-375 and Ser-391 to Leu-392.

This sequence belongs to the FAD-dependent oxidoreductase 2 family. NadB subfamily. FAD is required as a cofactor.

The protein localises to the cytoplasm. It catalyses the reaction L-aspartate + O2 = iminosuccinate + H2O2. Its pathway is cofactor biosynthesis; NAD(+) biosynthesis; iminoaspartate from L-aspartate (oxidase route): step 1/1. In terms of biological role, catalyzes the oxidation of L-aspartate to iminoaspartate, the first step in the de novo biosynthesis of NAD(+). In Yersinia pestis, this protein is L-aspartate oxidase (nadB).